The primary structure comprises 176 residues: Photosystem I assembly protein Ycf4 (176 aa).

2 helical membrane passes run 22 to 42 (FVWA…GTAS) and 48 to 68 (LIAF…GLFI).

This sequence belongs to the Ycf4 family.

Its subcellular location is the plastid thylakoid membrane. Seems to be required for the assembly of the photosystem I complex. This Cuscuta gronovii (Common dodder) protein is Photosystem I assembly protein Ycf4.